We begin with the raw amino-acid sequence, 2223 residues long: Protein Ycf2 (2223 aa).

1576–1583 (GSIGTGRS) is a binding site for ATP.

Belongs to the Ycf2 family.

The protein resides in the plastid. It localises to the chloroplast stroma. Functionally, probable ATPase of unknown function. Its presence in a non-photosynthetic plant (Epifagus virginiana) and experiments in tobacco indicate that it has an essential function which is probably not related to photosynthesis. This chain is Protein Ycf2, found in Silene latifolia (White campion).